The chain runs to 263 residues: MKIADLITWFESWANPAWCESWDNCGWQIEPGILHEEARVLVCLTPTLAVMEEAIALQANLIFAHHPLIFSPPKSLRRGEAIADMARLAFTKNIGIYSAHTNFDQVEDGTADVLAQILGLKDVAPIVPTQGGLGYGRVGLLDPFLNLQELLTVIQTRLAPPDLIFSPTADLQQIISRVAVLGGSGAGFISAVAETGAEAYLTSDCKFHQFQESRDRGLILIDAGHYATERPACDRLVEKLRSLNLHWVQLSNQDEDFRQFFVK.

Residues His65, His66, Asp104, His225, and Glu229 each coordinate a divalent metal cation.

The protein belongs to the GTP cyclohydrolase I type 2/NIF3 family. As to quaternary structure, homohexamer.

The sequence is that of GTP cyclohydrolase 1 type 2 homolog from Nostoc sp. (strain PCC 7120 / SAG 25.82 / UTEX 2576).